The following is a 96-amino-acid chain: Probable quinol oxidase subunit 4 (96 aa).

Transmembrane regions (helical) follow at residues 8 to 28, 37 to 57, and 68 to 88; these read TVGF…TLYT, TIIF…FMHL, and FKVI…YWVM.

Belongs to the cytochrome c oxidase bacterial subunit 4 family.

It is found in the cell membrane. It catalyses the reaction 2 a quinol + O2 = 2 a quinone + 2 H2O. Functionally, catalyzes quinol oxidation with the concomitant reduction of oxygen to water. This chain is Probable quinol oxidase subunit 4 (qoxD), found in Staphylococcus haemolyticus (strain JCSC1435).